The sequence spans 246 residues: Hydroxyacylglutathione hydrolase (246 aa).

Residues H58, H60, D62, H63, H117, D137, and H175 each contribute to the Zn(2+) site.

This sequence belongs to the metallo-beta-lactamase superfamily. Glyoxalase II family. Monomer. The cofactor is Zn(2+).

It carries out the reaction an S-(2-hydroxyacyl)glutathione + H2O = a 2-hydroxy carboxylate + glutathione + H(+). It participates in secondary metabolite metabolism; methylglyoxal degradation; (R)-lactate from methylglyoxal: step 2/2. Functionally, thiolesterase that catalyzes the hydrolysis of S-D-lactoyl-glutathione to form glutathione and D-lactic acid. This chain is Hydroxyacylglutathione hydrolase, found in Prochlorococcus marinus (strain MIT 9301).